A 510-amino-acid chain; its full sequence is Zinc finger and SCAN domain-containing protein 18 (510 aa).

The interval 1-40 (MLPLEKAFASPRSSPAPPDLPTPGSAAGVQQEEPETIPER) is disordered. One can recognise an SCAN box domain in the interval 49 to 131 (RLRFREFVYQ…SLVEGLADVL (83 aa)). Disordered stretches follow at residues 172–191 (ALGA…SPDP), 201–231 (EAKT…EWGH), 263–413 (TEEL…GKPY), and 461–510 (KTHE…EAQR). 2 stretches are compositionally biased toward basic and acidic residues: residues 214–231 (QKLK…EWGH) and 263–273 (TEELRLVERDP). Residues 288–299 (AGCACEEAAPAG) show a composition bias toward low complexity. Positions 344–356 (DSATGSQRQSVIQ) are enriched in polar residues. 2 consecutive C2H2-type zinc fingers follow at residues 413 to 435 (YACG…HSSH) and 441 to 463 (YACQ…QKTH). Low complexity predominate over residues 491 to 501 (GGPPESVEGEA).

This sequence belongs to the krueppel C2H2-type zinc-finger protein family.

Its subcellular location is the nucleus. In terms of biological role, may be involved in transcriptional regulation. This Homo sapiens (Human) protein is Zinc finger and SCAN domain-containing protein 18 (ZSCAN18).